A 616-amino-acid chain; its full sequence is Chaperone protein DnaK (616 aa).

Threonine 174 bears the Phosphothreonine; by autocatalysis mark. The interval 576-616 (QASAPGAGPEGASGGFGGENKKDDNVVDADYTVIDDDKKKT) is disordered. Positions 583–593 (GPEGASGGFGG) are enriched in gly residues.

It belongs to the heat shock protein 70 family.

Functionally, acts as a chaperone. This Heliobacterium modesticaldum (strain ATCC 51547 / Ice1) protein is Chaperone protein DnaK.